The chain runs to 219 residues: GTP cyclohydrolase-2 (219 aa).

51–55 contributes to the GTP binding site; sequence RIHSE. Residues Cys56, Cys67, and Cys69 each coordinate Zn(2+). GTP contacts are provided by residues Gln72, 94–96, and Thr116; that span reads EGR. Asp128 acts as the Proton acceptor in catalysis. Arg130 serves as the catalytic Nucleophile. 2 residues coordinate GTP: Thr151 and Lys156.

This sequence belongs to the GTP cyclohydrolase II family. Zn(2+) serves as cofactor.

It carries out the reaction GTP + 4 H2O = 2,5-diamino-6-hydroxy-4-(5-phosphoribosylamino)-pyrimidine + formate + 2 phosphate + 3 H(+). The protein operates within cofactor biosynthesis; riboflavin biosynthesis; 5-amino-6-(D-ribitylamino)uracil from GTP: step 1/4. Catalyzes the conversion of GTP to 2,5-diamino-6-ribosylamino-4(3H)-pyrimidinone 5'-phosphate (DARP), formate and pyrophosphate. This Pasteurella multocida (strain Pm70) protein is GTP cyclohydrolase-2.